A 158-amino-acid polypeptide reads, in one-letter code: SsrA-binding protein (158 aa).

Residues 133 to 148 (KAQDKRETSAKRDWNR) show a composition bias toward basic and acidic residues. A disordered region spans residues 133–158 (KAQDKRETSAKRDWNRQKARLLKQNG). Residues 149-158 (QKARLLKQNG) are compositionally biased toward basic residues.

It belongs to the SmpB family.

Its subcellular location is the cytoplasm. In terms of biological role, required for rescue of stalled ribosomes mediated by trans-translation. Binds to transfer-messenger RNA (tmRNA), required for stable association of tmRNA with ribosomes. tmRNA and SmpB together mimic tRNA shape, replacing the anticodon stem-loop with SmpB. tmRNA is encoded by the ssrA gene; the 2 termini fold to resemble tRNA(Ala) and it encodes a 'tag peptide', a short internal open reading frame. During trans-translation Ala-aminoacylated tmRNA acts like a tRNA, entering the A-site of stalled ribosomes, displacing the stalled mRNA. The ribosome then switches to translate the ORF on the tmRNA; the nascent peptide is terminated with the 'tag peptide' encoded by the tmRNA and targeted for degradation. The ribosome is freed to recommence translation, which seems to be the essential function of trans-translation. This Jannaschia sp. (strain CCS1) protein is SsrA-binding protein.